The sequence spans 77 residues: Translational regulator CsrA (77 aa).

Belongs to the CsrA/RsmA family. Homodimer; the beta-strands of each monomer intercalate to form a hydrophobic core, while the alpha-helices form wings that extend away from the core.

It localises to the cytoplasm. In terms of biological role, a translational regulator that binds mRNA to regulate translation initiation and/or mRNA stability. Usually binds in the 5'-UTR at or near the Shine-Dalgarno sequence preventing ribosome-binding, thus repressing translation. Its main target seems to be the major flagellin gene, while its function is anatagonized by FliW. The sequence is that of Translational regulator CsrA from Desulfitobacterium hafniense (strain DSM 10664 / DCB-2).